Consider the following 273-residue polypeptide: Dermonecrotic toxin LdSicTox-alphaIB1aii (273 aa).

Histidine 5 is a catalytic residue. 2 residues coordinate Mg(2+): glutamate 25 and aspartate 27. The active-site Nucleophile is histidine 41. Intrachain disulfides connect cysteine 45–cysteine 51 and cysteine 47–cysteine 190. Aspartate 85 provides a ligand contact to Mg(2+). Residue asparagine 250 is glycosylated (N-linked (GlcNAc...) asparagine).

The protein belongs to the arthropod phospholipase D family. Class II subfamily. It depends on Mg(2+) as a cofactor. In terms of tissue distribution, expressed by the venom gland.

The protein localises to the secreted. The enzyme catalyses an N-(acyl)-sphingosylphosphocholine = an N-(acyl)-sphingosyl-1,3-cyclic phosphate + choline. The catalysed reaction is an N-(acyl)-sphingosylphosphoethanolamine = an N-(acyl)-sphingosyl-1,3-cyclic phosphate + ethanolamine. It carries out the reaction a 1-acyl-sn-glycero-3-phosphocholine = a 1-acyl-sn-glycero-2,3-cyclic phosphate + choline. It catalyses the reaction a 1-acyl-sn-glycero-3-phosphoethanolamine = a 1-acyl-sn-glycero-2,3-cyclic phosphate + ethanolamine. In terms of biological role, dermonecrotic toxins cleave the phosphodiester linkage between the phosphate and headgroup of certain phospholipids (sphingolipid and lysolipid substrates), forming an alcohol (often choline) and a cyclic phosphate. This toxin acts on sphingomyelin (SM). It may also act on ceramide phosphoethanolamine (CPE), lysophosphatidylcholine (LPC) and lysophosphatidylethanolamine (LPE), but not on lysophosphatidylserine (LPS), and lysophosphatidylglycerol (LPG). It acts by transphosphatidylation, releasing exclusively cyclic phosphate products as second products. Induces dermonecrosis, hemolysis, increased vascular permeability, edema, inflammatory response, and platelet aggregation. This chain is Dermonecrotic toxin LdSicTox-alphaIB1aii, found in Loxosceles deserta (Desert recluse spider).